The chain runs to 365 residues: DNA replication and repair protein RecF (365 aa).

Position 30–37 (30–37) interacts with ATP; it reads GANGQGKT.

Belongs to the RecF family.

It is found in the cytoplasm. In terms of biological role, the RecF protein is involved in DNA metabolism; it is required for DNA replication and normal SOS inducibility. RecF binds preferentially to single-stranded, linear DNA. It also seems to bind ATP. This Geobacter metallireducens (strain ATCC 53774 / DSM 7210 / GS-15) protein is DNA replication and repair protein RecF.